Here is a 230-residue protein sequence, read N- to C-terminus: MSGKENNFPPLPKFIPLKPCFYQNFSDEIPIEHQVLVKRIYRLWLFYCATLGVNLVACLAWWIAGGSGANFGLALLWLLLFSPCGYVCWFRPAYKAFRSDSSFNFMAFFFIFGAQFILTIIQAVGFSGWGACGWLAAIGFFQTSVGAAVVMLLPAIMFSMSAAMMAVMIMKVHSIYRGTGGSFQKAQTEWSTGTWRNPPSREAQFNNFSGNSLPEYPTVPSYPASGGQWP.

Residues 1-39 (MSGKENNFPPLPKFIPLKPCFYQNFSDEIPIEHQVLVKR) are Cytoplasmic-facing. Helical transmembrane passes span 40–60 (IYRL…ACLA), 61–81 (WWIA…LLLF), 105–125 (FMAF…QAVG), and 149–169 (VVML…AVMI). At 170-230 (MKVHSIYRGT…SYPASGGQWP (61 aa)) the chain is on the cytoplasmic side. Threonine 194 carries the phosphothreonine modification. A disordered region spans residues 208-230 (FSGNSLPEYPTVPSYPASGGQWP).

It belongs to the SCAMP family.

It localises to the membrane. Its function is as follows. Probably involved in membrane protein trafficking. The chain is Secretory carrier-associated membrane protein 4 (SCAMP4) from Bos taurus (Bovine).